The primary structure comprises 281 residues: Bifunctional N-acyl-homoserine lactone acylase/prephenate dehydratase (281 aa).

A Prephenate dehydratase domain is found at 6–181; the sequence is IIAFQGRPGA…NTTRFYIASR (176 aa). One can recognise an ACT domain in the interval 196-273; the sequence is TLLFRVNNQP…EQQEILGVYP (78 aa). L-phenylalanine-binding residues include alanine 207, leucine 208, asparagine 221, and methionine 222.

Homodimer.

The catalysed reaction is an N-acyl-L-homoserine lactone + H2O = L-homoserine lactone + a carboxylate. It catalyses the reaction prephenate + H(+) = 3-phenylpyruvate + CO2 + H2O. The protein operates within amino-acid biosynthesis; L-phenylalanine biosynthesis; phenylpyruvate from prephenate: step 1/1. Its function is as follows. Multifunctional enzyme that acts on N-acyl-homoserine lactones (AHLs), beta-lactam antibiotics and shows prephenate dehydratase activity. Acts as an acylase on AHL and hydrolyzes the amide bond of the acyl side-chain of AHL molecules, releasing homoserine lactone (HSL) and the fatty acid. Can use different 3-oxo-acyl homoserine lactones, such as 3-oxo-decanoyl homoserine lactone, which is the preferred substrate, 3-oxo-octanoyl homoserine lactone, 3-oxo-hexanoyl homoserine lactone and 3-oxo-dodecanoyl homoserine lactone. It can also degrade various beta-lactam antibiotics, including penicillin G, amoxicillin and ampicillin, but not cefotaxime. In addition, it can complement a phenylalanine auxotrophic E.coli mutant, which carries a kanamycin gene inserted into pheA, suggesting that GqqA can also function as a prephenate dehydratase. Involved in bacterial quorum quenching (QQ) and cellulose biofilm formation. This Komagataeibacter europaeus (Gluconacetobacter europaeus) protein is Bifunctional N-acyl-homoserine lactone acylase/prephenate dehydratase.